The chain runs to 562 residues: Long-chain-fatty-acid--CoA ligase (562 aa).

213-224 is a binding site for ATP; the sequence is YTGGTTGVAKGA.

This sequence belongs to the ATP-dependent AMP-binding enzyme family. Mg(2+) serves as cofactor.

It localises to the membrane. It catalyses the reaction a long-chain fatty acid + ATP + CoA = a long-chain fatty acyl-CoA + AMP + diphosphate. It functions in the pathway lipid metabolism; fatty acid beta-oxidation. Catalyzes the esterification, concomitant with transport, of exogenous long-chain fatty acids into metabolically active CoA thioesters for subsequent degradation or incorporation into phospholipids. This is Long-chain-fatty-acid--CoA ligase (fadD) from Yersinia pestis.